We begin with the raw amino-acid sequence, 132 residues long: Small ribosomal subunit protein bS6 (132 aa).

The segment at 94-132 is disordered; that stretch reads DAVTEESQLAKNADEKRARKATTRRPDRDDSDDNDHSED. Residues 122-132 show a composition bias toward acidic residues; it reads DDSDDNDHSED.

The protein belongs to the bacterial ribosomal protein bS6 family.

Functionally, binds together with bS18 to 16S ribosomal RNA. The chain is Small ribosomal subunit protein bS6 from Psychrobacter arcticus (strain DSM 17307 / VKM B-2377 / 273-4).